A 128-amino-acid chain; its full sequence is Large ribosomal subunit protein bL19 (128 aa).

Belongs to the bacterial ribosomal protein bL19 family.

Its function is as follows. This protein is located at the 30S-50S ribosomal subunit interface and may play a role in the structure and function of the aminoacyl-tRNA binding site. In Mesoplasma florum (strain ATCC 33453 / NBRC 100688 / NCTC 11704 / L1) (Acholeplasma florum), this protein is Large ribosomal subunit protein bL19.